The sequence spans 732 residues: Eukaryotic translation initiation factor 3 subunit B (732 aa).

Residues 1-94 (MTTLESLKIE…LFIEMESVSA (94 aa)) form a sufficient for interaction with HCR1 and TIF32 region. A sufficient for interaction with PIC8 region spans residues 1 to 219 (MTTLESLKIE…GVTSWGGPNF (219 aa)). The RRM domain maps to 37–120 (NFLVVDGAPV…HRLLVNSLND (84 aa)). WD repeat units lie at residues 185–224 (ARKN…RLKR), 237–280 (PTEK…LMKT), 439–481 (EMKD…KFFA), and 507–554 (VDQQ…KTLN).

Belongs to the eIF-3 subunit B family. Component of the eukaryotic translation initiation factor 3 (eIF-3) complex.

It localises to the cytoplasm. RNA-binding component of the eukaryotic translation initiation factor 3 (eIF-3) complex, which is involved in protein synthesis of a specialized repertoire of mRNAs and, together with other initiation factors, stimulates binding of mRNA and methionyl-tRNAi to the 40S ribosome. The eIF-3 complex specifically targets and initiates translation of a subset of mRNAs involved in cell proliferation. This Kluyveromyces lactis (strain ATCC 8585 / CBS 2359 / DSM 70799 / NBRC 1267 / NRRL Y-1140 / WM37) (Yeast) protein is Eukaryotic translation initiation factor 3 subunit B.